A 205-amino-acid polypeptide reads, in one-letter code: GTP cyclohydrolase-2 (205 aa).

49-53 (RIHSE) is a binding site for GTP. Zn(2+) is bound by residues Cys54, Cys65, and Cys67. GTP contacts are provided by residues Gln70, 92 to 94 (EGR), and Thr114. The active-site Proton acceptor is the Asp126. Arg128 acts as the Nucleophile in catalysis. Residues Thr149 and Lys154 each coordinate GTP.

The protein belongs to the GTP cyclohydrolase II family. Zn(2+) serves as cofactor.

The catalysed reaction is GTP + 4 H2O = 2,5-diamino-6-hydroxy-4-(5-phosphoribosylamino)-pyrimidine + formate + 2 phosphate + 3 H(+). It participates in cofactor biosynthesis; riboflavin biosynthesis; 5-amino-6-(D-ribitylamino)uracil from GTP: step 1/4. In terms of biological role, catalyzes the conversion of GTP to 2,5-diamino-6-ribosylamino-4(3H)-pyrimidinone 5'-phosphate (DARP), formate and pyrophosphate. The chain is GTP cyclohydrolase-2 from Shewanella denitrificans (strain OS217 / ATCC BAA-1090 / DSM 15013).